A 255-amino-acid chain; its full sequence is 1-(5-phosphoribosyl)-5-[(5-phosphoribosylamino)methylideneamino] imidazole-4-carboxamide isomerase (255 aa).

Residue D8 is the Proton acceptor of the active site. The active-site Proton donor is the D129.

This sequence belongs to the HisA/HisF family.

It is found in the cytoplasm. It carries out the reaction 1-(5-phospho-beta-D-ribosyl)-5-[(5-phospho-beta-D-ribosylamino)methylideneamino]imidazole-4-carboxamide = 5-[(5-phospho-1-deoxy-D-ribulos-1-ylimino)methylamino]-1-(5-phospho-beta-D-ribosyl)imidazole-4-carboxamide. It participates in amino-acid biosynthesis; L-histidine biosynthesis; L-histidine from 5-phospho-alpha-D-ribose 1-diphosphate: step 4/9. In Prochlorococcus marinus (strain MIT 9301), this protein is 1-(5-phosphoribosyl)-5-[(5-phosphoribosylamino)methylideneamino] imidazole-4-carboxamide isomerase.